Consider the following 534-residue polypeptide: ATP synthase subunit beta 2 (534 aa).

185–192 lines the ATP pocket; it reads GGAGVGKT. The span at 494–505 shows a compositional bias: basic and acidic residues; sequence AAAREADARREA. A disordered region spans residues 494–534; that stretch reads AAAREADARREAAAAASGAGPGTTSDPASGSAEPQGARHGR.

The protein belongs to the ATPase alpha/beta chains family. In terms of assembly, F-type ATPases have 2 components, CF(1) - the catalytic core - and CF(0) - the membrane proton channel. CF(1) has five subunits: alpha(3), beta(3), gamma(1), delta(1), epsilon(1). CF(0) has three main subunits: a(1), b(2) and c(9-12). The alpha and beta chains form an alternating ring which encloses part of the gamma chain. CF(1) is attached to CF(0) by a central stalk formed by the gamma and epsilon chains, while a peripheral stalk is formed by the delta and b chains.

It localises to the cell inner membrane. The enzyme catalyses ATP + H2O + 4 H(+)(in) = ADP + phosphate + 5 H(+)(out). Functionally, produces ATP from ADP in the presence of a proton gradient across the membrane. The catalytic sites are hosted primarily by the beta subunits. In Burkholderia mallei (strain NCTC 10247), this protein is ATP synthase subunit beta 2.